A 367-amino-acid chain; its full sequence is Quinolinate synthase (367 aa).

2 residues coordinate iminosuccinate: His-45 and Ser-62. Cys-109 lines the [4Fe-4S] cluster pocket. Iminosuccinate-binding positions include 140–142 (YVN) and Ser-161. Cys-229 provides a ligand contact to [4Fe-4S] cluster. Residues 255 to 257 (HPE) and Thr-272 each bind iminosuccinate. Cys-319 serves as a coordination point for [4Fe-4S] cluster.

This sequence belongs to the quinolinate synthase family. Type 3 subfamily. Requires [4Fe-4S] cluster as cofactor.

It is found in the cytoplasm. It catalyses the reaction iminosuccinate + dihydroxyacetone phosphate = quinolinate + phosphate + 2 H2O + H(+). It participates in cofactor biosynthesis; NAD(+) biosynthesis; quinolinate from iminoaspartate: step 1/1. Catalyzes the condensation of iminoaspartate with dihydroxyacetone phosphate to form quinolinate. The polypeptide is Quinolinate synthase (Geobacillus kaustophilus (strain HTA426)).